The sequence spans 177 residues: Ribosome maturation factor RimM (177 aa).

The region spanning 100–177 (EDEYYWSDLV…TVLVAWPSDY (78 aa)) is the PRC barrel domain.

The protein belongs to the RimM family. In terms of assembly, binds ribosomal protein uS19.

The protein resides in the cytoplasm. An accessory protein needed during the final step in the assembly of 30S ribosomal subunit, possibly for assembly of the head region. Essential for efficient processing of 16S rRNA. May be needed both before and after RbfA during the maturation of 16S rRNA. It has affinity for free ribosomal 30S subunits but not for 70S ribosomes. The sequence is that of Ribosome maturation factor RimM from Psychrobacter arcticus (strain DSM 17307 / VKM B-2377 / 273-4).